The chain runs to 291 residues: tRNA U34 carboxymethyltransferase (291 aa).

Carboxy-S-adenosyl-L-methionine-binding positions include Lys-61, Trp-75, Lys-80, Gly-100, 122–124 (DPS), 149–150 (VE), Tyr-169, and Arg-284.

This sequence belongs to the class I-like SAM-binding methyltransferase superfamily. CmoB family. In terms of assembly, homotetramer.

It carries out the reaction carboxy-S-adenosyl-L-methionine + 5-hydroxyuridine(34) in tRNA = 5-carboxymethoxyuridine(34) in tRNA + S-adenosyl-L-homocysteine + H(+). Functionally, catalyzes carboxymethyl transfer from carboxy-S-adenosyl-L-methionine (Cx-SAM) to 5-hydroxyuridine (ho5U) to form 5-carboxymethoxyuridine (cmo5U) at position 34 in tRNAs. In Campylobacter jejuni (strain RM1221), this protein is tRNA U34 carboxymethyltransferase.